Reading from the N-terminus, the 209-residue chain is Small ribosomal subunit protein uS5 (209 aa).

Over residues 1-11 (MTQPNTQTTPN) the composition is skewed to polar residues. Residues 1-55 (MTQPNTQTTPNDVPAAAEGQQEQQQQQRRGGGRERRGGGRRGDRRGQERDSEWQE) form a disordered region. The span at 18–28 (EGQQEQQQQQR) shows a compositional bias: low complexity. Over residues 31 to 55 (GGRERRGGGRRGDRRGQERDSEWQE) the composition is skewed to basic and acidic residues. The S5 DRBM domain occupies 53–116 (WQERVVQIRR…ADGKKHLVKV (64 aa)).

This sequence belongs to the universal ribosomal protein uS5 family. Part of the 30S ribosomal subunit. Contacts proteins S4 and S8.

Functionally, with S4 and S12 plays an important role in translational accuracy. In terms of biological role, located at the back of the 30S subunit body where it stabilizes the conformation of the head with respect to the body. In Prochlorococcus marinus (strain MIT 9313), this protein is Small ribosomal subunit protein uS5.